The chain runs to 429 residues: MDRIRIIGGNKLHGTIPISGAKNAALPLMIAALLSDETLILDNVPRLADVALLQRILGNHGVDIMAAGKRPGDHEYQGQTLHISAKNIIDTTAPYELVSKMRASFWVIAPLLARMHEAKVSLPGGCAIGTRPVDLLIMALEKLGVELSIDAGYVVAKAPGGLKGATIEFPKVTVSGTHVALMAATLAKGTTIISNAACEPEITDVADCLNKMGARITGAGTPRILIEGVDKLHGARHTVLPDRIETGTYAMAVAMTGGEVQLSGARPELLQSALDVLTQAGATITINNDGIKVARNGAGISPVTVTTAPFPGFPTDLQAQLMALMTRAKGASHITETIFENRFMHVQELARFGAKISLDGETATIDGVTKLRGAPVMATDLRASVSLVIAALAAEGETMVNRIYHLDRGFERLEEKLSACGATIERISG.

22-23 (KN) lines the phosphoenolpyruvate pocket. A UDP-N-acetyl-alpha-D-glucosamine-binding site is contributed by Arg102. Cys126 serves as the catalytic Proton donor. At Cys126 the chain carries 2-(S-cysteinyl)pyruvic acid O-phosphothioketal. Residues 131-135 (RPVDL), Asp316, and Ile338 each bind UDP-N-acetyl-alpha-D-glucosamine.

This sequence belongs to the EPSP synthase family. MurA subfamily.

It localises to the cytoplasm. The catalysed reaction is phosphoenolpyruvate + UDP-N-acetyl-alpha-D-glucosamine = UDP-N-acetyl-3-O-(1-carboxyvinyl)-alpha-D-glucosamine + phosphate. It participates in cell wall biogenesis; peptidoglycan biosynthesis. In terms of biological role, cell wall formation. Adds enolpyruvyl to UDP-N-acetylglucosamine. In Rhodopseudomonas palustris (strain HaA2), this protein is UDP-N-acetylglucosamine 1-carboxyvinyltransferase.